The primary structure comprises 277 residues: Chitosanase (277 aa).

Residues 1–35 (MKISMQKADFWKKAAISLLVFTMFFTLMMSETVFA) form the signal peptide. Glu54 (proton donor) is an active-site residue. Asp70 acts as the Nucleophile in catalysis.

It belongs to the glycosyl hydrolase 46 family.

The protein localises to the secreted. The catalysed reaction is Endohydrolysis of beta-(1-&gt;4)-linkages between D-glucosamine residues in a partly acetylated chitosan.. Aids in the defense against invading fungal pathogens by degrading their cell wall chitosan. This is Chitosanase (csn) from Bacillus subtilis (strain 168).